The primary structure comprises 284 residues: Serine/arginine-rich splicing factor RS2Z32 (284 aa).

Residues 11–81 enclose the RRM domain; the sequence is TRLYVGRLSS…SRITVEASRG (71 aa). The segment at 74–97 is disordered; that stretch reads ITVEASRGAPRGSRDNGSRGPPPG. CCHC-type zinc fingers lie at residues 99–116 and 121–138; these read GRCF…DCTA and NKCY…NCKN. The disordered stretch occupies residues 132 to 284; it reads IERNCKNSPS…RPSPKGSESP (153 aa). Positions 159–180 are enriched in basic residues; sequence RSPRRRRSPSRSRSYSRGRSYS. A phosphoserine mark is found at S166, S168, and S184. Residues 186–203 show a composition bias toward basic and acidic residues; it reads VRREKSVEDRSRSPKAME. A phosphoserine mark is found at S205, S207, S214, S216, S225, S235, S255, S265, S277, and S281. The segment covering 209–236 has biased composition (basic and acidic residues); that stretch reads KGRDQSLSPDRKVIDASPKRGSDYDGSP.

It belongs to the splicing factor SR family. RS2Z subfamily. In terms of assembly, component of the spliceosome. Post-translationally, extensively phosphorylated on serine residues in the RS domain.

Its subcellular location is the nucleus. In terms of biological role, probably involved in intron recognition and spliceosome assembly. The sequence is that of Serine/arginine-rich splicing factor RS2Z32 (RS2Z32) from Arabidopsis thaliana (Mouse-ear cress).